Consider the following 355-residue polypeptide: Probable protein phosphatase 2C 21 (355 aa).

Residues 23–329 form the PPM-type phosphatase domain; that stretch reads RFGLSSMQGW…DNMTIILVQF (307 aa). Residues Asp57, Gly58, Asp272, and Asp320 each coordinate Mn(2+). Positions 329-355 are disordered; it reads FKKPNPSETEPEDSKPEPSEDEPSSSS.

This sequence belongs to the PP2C family. The cofactor is Mg(2+). Mn(2+) serves as cofactor.

The enzyme catalyses O-phospho-L-seryl-[protein] + H2O = L-seryl-[protein] + phosphate. It carries out the reaction O-phospho-L-threonyl-[protein] + H2O = L-threonyl-[protein] + phosphate. The sequence is that of Probable protein phosphatase 2C 21 (PPC4-2) from Arabidopsis thaliana (Mouse-ear cress).